Reading from the N-terminus, the 317-residue chain is Acetyl-coenzyme A carboxylase carboxyl transferase subunit alpha (317 aa).

Residues lysine 37–aspartate 291 enclose the CoA carboxyltransferase C-terminal domain.

This sequence belongs to the AccA family. In terms of assembly, acetyl-CoA carboxylase is a heterohexamer composed of biotin carboxyl carrier protein (AccB), biotin carboxylase (AccC) and two subunits each of ACCase subunit alpha (AccA) and ACCase subunit beta (AccD).

The protein resides in the cytoplasm. The enzyme catalyses N(6)-carboxybiotinyl-L-lysyl-[protein] + acetyl-CoA = N(6)-biotinyl-L-lysyl-[protein] + malonyl-CoA. Its pathway is lipid metabolism; malonyl-CoA biosynthesis; malonyl-CoA from acetyl-CoA: step 1/1. Functionally, component of the acetyl coenzyme A carboxylase (ACC) complex. First, biotin carboxylase catalyzes the carboxylation of biotin on its carrier protein (BCCP) and then the CO(2) group is transferred by the carboxyltransferase to acetyl-CoA to form malonyl-CoA. This Rhodospirillum centenum (strain ATCC 51521 / SW) protein is Acetyl-coenzyme A carboxylase carboxyl transferase subunit alpha.